The sequence spans 103 residues: MLNDLYEEIKLRKTQPREGSYTNYLFDKGLDKILKKVGEEATEVVIAAKNNEQELIAEVSDLTYHLLVLLAEQNIPLSKIQAELQNREGKLSTTRDRKEINDL.

Belongs to the PRA-PH family.

It is found in the cytoplasm. The catalysed reaction is 1-(5-phospho-beta-D-ribosyl)-ATP + H2O = 1-(5-phospho-beta-D-ribosyl)-5'-AMP + diphosphate + H(+). It functions in the pathway amino-acid biosynthesis; L-histidine biosynthesis; L-histidine from 5-phospho-alpha-D-ribose 1-diphosphate: step 2/9. This chain is Phosphoribosyl-ATP pyrophosphatase, found in Listeria monocytogenes serotype 4b (strain CLIP80459).